Reading from the N-terminus, the 146-residue chain is Transcription antitermination protein NusB (146 aa).

It belongs to the NusB family.

In terms of biological role, involved in transcription antitermination. Required for transcription of ribosomal RNA (rRNA) genes. Binds specifically to the boxA antiterminator sequence of the ribosomal RNA (rrn) operons. The polypeptide is Transcription antitermination protein NusB (Solibacter usitatus (strain Ellin6076)).